The sequence spans 703 residues: Ion-translocating oxidoreductase complex subunit C (703 aa).

2 4Fe-4S ferredoxin-type domains span residues 369-398 (YDPQ…QQMY) and 408-437 (KSNQ…IQYF). [4Fe-4S] cluster is bound by residues cysteine 378, cysteine 381, cysteine 384, cysteine 388, cysteine 417, cysteine 420, cysteine 423, and cysteine 427. Disordered stretches follow at residues 467–542 (RLER…PDNS) and 555–680 (RQQT…PKKA). Residues 485 to 497 (ARREELAANKGED) show a composition bias toward basic and acidic residues. Positions 559–577 (NGNSPVSSASNSDSATISA) are enriched in low complexity. Residues 578–592 (DNTHSTPKTAQNQTA) are compositionally biased toward polar residues. Low complexity-rich tracts occupy residues 598 to 629 (AAVA…TEKT) and 641 to 669 (AAVA…EKTA).

This sequence belongs to the 4Fe4S bacterial-type ferredoxin family. RnfC subfamily. In terms of assembly, the complex is composed of six subunits: RnfA, RnfB, RnfC, RnfD, RnfE and RnfG. It depends on [4Fe-4S] cluster as a cofactor.

Its subcellular location is the cell inner membrane. Functionally, part of a membrane-bound complex that couples electron transfer with translocation of ions across the membrane. The polypeptide is Ion-translocating oxidoreductase complex subunit C (Actinobacillus succinogenes (strain ATCC 55618 / DSM 22257 / CCUG 43843 / 130Z)).